A 132-amino-acid chain; its full sequence is Small ribosomal subunit protein uS8 (132 aa).

Belongs to the universal ribosomal protein uS8 family. Part of the 30S ribosomal subunit. Contacts proteins S5 and S12.

In terms of biological role, one of the primary rRNA binding proteins, it binds directly to 16S rRNA central domain where it helps coordinate assembly of the platform of the 30S subunit. This Clostridium tetani (strain Massachusetts / E88) protein is Small ribosomal subunit protein uS8.